Here is a 313-residue protein sequence, read N- to C-terminus: Ribose-phosphate pyrophosphokinase (313 aa).

ATP contacts are provided by residues 37–39 (DGE) and 96–97 (RQ). H131 and D170 together coordinate Mg(2+). Residue K193 is part of the active site. Residues R195, D219, and 223 to 227 (DTAGT) contribute to the D-ribose 5-phosphate site.

Belongs to the ribose-phosphate pyrophosphokinase family. Class I subfamily. As to quaternary structure, homohexamer. Mg(2+) is required as a cofactor.

It localises to the cytoplasm. The catalysed reaction is D-ribose 5-phosphate + ATP = 5-phospho-alpha-D-ribose 1-diphosphate + AMP + H(+). It participates in metabolic intermediate biosynthesis; 5-phospho-alpha-D-ribose 1-diphosphate biosynthesis; 5-phospho-alpha-D-ribose 1-diphosphate from D-ribose 5-phosphate (route I): step 1/1. In terms of biological role, involved in the biosynthesis of the central metabolite phospho-alpha-D-ribosyl-1-pyrophosphate (PRPP) via the transfer of pyrophosphoryl group from ATP to 1-hydroxyl of ribose-5-phosphate (Rib-5-P). This chain is Ribose-phosphate pyrophosphokinase, found in Pseudomonas putida (strain ATCC 47054 / DSM 6125 / CFBP 8728 / NCIMB 11950 / KT2440).